The sequence spans 55 residues: Large ribosomal subunit protein bL33B (55 aa).

It belongs to the bacterial ribosomal protein bL33 family.

The sequence is that of Large ribosomal subunit protein bL33B from Rhodococcus jostii (strain RHA1).